We begin with the raw amino-acid sequence, 542 residues long: Membrane protein insertase YidC (542 aa).

A helical transmembrane segment spans residues 5 to 25 (TLLAVILSITVFYVFSLLFAP). The tract at residues 33 to 64 (ESTGQAVSAPVSAGQPVAGGVQPSASAPSLPA) is disordered. The segment covering 54-64 (QPSASAPSLPA) has biased composition (low complexity). 5 helical membrane-spanning segments follow: residues 323–343 (LDLG…KYFY), 345–365 (YVGN…ALFF), 419–439 (LPML…MFSI), 463–483 (MLGL…TMFI), and 500–520 (MLAL…GLVL).

It belongs to the OXA1/ALB3/YidC family. Type 1 subfamily. In terms of assembly, interacts with the Sec translocase complex via SecD. Specifically interacts with transmembrane segments of nascent integral membrane proteins during membrane integration.

It is found in the cell inner membrane. Functionally, required for the insertion and/or proper folding and/or complex formation of integral membrane proteins into the membrane. Involved in integration of membrane proteins that insert both dependently and independently of the Sec translocase complex, as well as at least some lipoproteins. Aids folding of multispanning membrane proteins. In Pelobacter propionicus (strain DSM 2379 / NBRC 103807 / OttBd1), this protein is Membrane protein insertase YidC.